Reading from the N-terminus, the 309-residue chain is MSEINISAAAVKELREKTGAGMMDCKKALIETSGNFEEAIDFLRKKGLAAAAKKAGRIASEGLTAAKVDGLTGVVVEVNSETDFVARNEQFQDLVKDIANLAVIAKTIDTLKTSKMQSGKSVEEEIIENIATIGENLTLRRMDILEISEGAIGSYVHNEVVPNLGKISVLVGLESNAKDKTKLEALAKQVAVHVAGNNPQSIDDSSLDQALVERERKVFFEKSKEEGKPDNIIEKMVEGRIRKFFSEVVLLQQNFLFEPKLTVAEVIKNAEKELGAEIKIAKFIRYELGEGIEHEEKNFADEVAAITQG.

Residues 82–85 form an involved in Mg(2+) ion dislocation from EF-Tu region; the sequence is TDFV.

This sequence belongs to the EF-Ts family.

It localises to the cytoplasm. Functionally, associates with the EF-Tu.GDP complex and induces the exchange of GDP to GTP. It remains bound to the aminoacyl-tRNA.EF-Tu.GTP complex up to the GTP hydrolysis stage on the ribosome. The polypeptide is Elongation factor Ts (Rickettsia felis (strain ATCC VR-1525 / URRWXCal2) (Rickettsia azadi)).